The following is a 167-amino-acid chain: Bacterial non-heme ferritin (167 aa).

One can recognise a Ferritin-like diiron domain in the interval 1 to 145; the sequence is MLSKEVVKLL…GIVDKIKLIG (145 aa). Fe cation-binding residues include glutamate 17, glutamate 50, histidine 53, glutamate 94, and glutamine 127.

The protein belongs to the ferritin family. Prokaryotic subfamily. As to quaternary structure, homooligomer of 24 subunits that assemble into a spherical protein shell (12 +/- 1 nM diameter) that can sequester at least 2000 iron atoms.

The protein localises to the cytoplasm. The enzyme catalyses 4 Fe(2+) + O2 + 6 H2O = 4 iron(III) oxide-hydroxide + 12 H(+). Its function is as follows. Iron-storage protein. The sequence is that of Bacterial non-heme ferritin (ftn) from Campylobacter jejuni subsp. jejuni serotype O:2 (strain ATCC 700819 / NCTC 11168).